The sequence spans 458 residues: Estrogen-related receptor gamma (458 aa).

Lys40 is covalently cross-linked (Glycyl lysine isopeptide (Lys-Gly) (interchain with G-Cter in SUMO)). Positions 42-52 are enriched in polar residues; that stretch reads EPSSPASLTDS. The interval 42-85 is disordered; that stretch reads EPSSPASLTDSVNHHSPGGSSDASGSYSSTMNGHQNGLDSPPLY. Ser45 is subject to Phosphoserine. The span at 57-70 shows a compositional bias: low complexity; sequence SPGGSSDASGSYSS. Residues 125-200 constitute a DNA-binding region (nuclear receptor); sequence KRLCLVCGDI…VGMLKEGVRL (76 aa). 2 consecutive NR C4-type zinc fingers follow at residues 128-148 and 164-188; these read CLVC…CEAC and CPAT…FMKC. The 225-residue stretch at 233-457 folds into the NR LBD domain; sequence PYNKIVSHLL…KLFLEMLEAK (225 aa).

The protein belongs to the nuclear hormone receptor family. NR3 subfamily. In terms of assembly, homodimer. Binds TLE1, PNRC1 and PNRC2. Binds GRIP1. Interacts with NRIP1, NCOA1 and NCOR2. Acetylated by PCAF/KAT2 (in vitro). In terms of processing, sumoylation on Lys-40 is enhanced by phosphorylation at Ser-45 and represses transcriptional activity. Post-translationally, phosphorylation on Ser-45 enhances sumoylation on Lys-40 thus repressing transcriptional activity. Expressed in the heart, kidney, brain, lung, bone marrow, adrenal gland, trachea, spinal cord and thyroid gland.

Its subcellular location is the nucleus. Functionally, orphan receptor that acts as a transcription activator in the absence of bound ligand. Binds specifically to an estrogen response element and activates reporter genes controlled by estrogen response elements. Induces the expression of PERM1 in the skeletal muscle. The protein is Estrogen-related receptor gamma (ESRRG) of Homo sapiens (Human).